We begin with the raw amino-acid sequence, 179 residues long: Large ribosomal subunit protein uL5 (179 aa).

This sequence belongs to the universal ribosomal protein uL5 family. Part of the 50S ribosomal subunit; part of the 5S rRNA/L5/L18/L25 subcomplex. Contacts the 5S rRNA and the P site tRNA. Forms a bridge to the 30S subunit in the 70S ribosome.

In terms of biological role, this is one of the proteins that bind and probably mediate the attachment of the 5S RNA into the large ribosomal subunit, where it forms part of the central protuberance. In the 70S ribosome it contacts protein S13 of the 30S subunit (bridge B1b), connecting the 2 subunits; this bridge is implicated in subunit movement. Contacts the P site tRNA; the 5S rRNA and some of its associated proteins might help stabilize positioning of ribosome-bound tRNAs. The polypeptide is Large ribosomal subunit protein uL5 (Bacillus cereus (strain G9842)).